The following is a 776-amino-acid chain: DNA ligase (776 aa).

Residues Asp31–Asp35, Ser80–Leu81, and Glu112 each bind NAD(+). Lys114 serves as the catalytic N6-AMP-lysine intermediate. NAD(+) is bound by residues Arg135, Glu172, Lys288, and Lys312. Zn(2+) contacts are provided by Cys406, Cys409, Cys436, and Cys442. Positions Ala693 to Val776 constitute a BRCT domain.

The protein belongs to the NAD-dependent DNA ligase family. LigA subfamily. Requires Mg(2+) as cofactor. It depends on Mn(2+) as a cofactor.

The enzyme catalyses NAD(+) + (deoxyribonucleotide)n-3'-hydroxyl + 5'-phospho-(deoxyribonucleotide)m = (deoxyribonucleotide)n+m + AMP + beta-nicotinamide D-nucleotide.. Its function is as follows. DNA ligase that catalyzes the formation of phosphodiester linkages between 5'-phosphoryl and 3'-hydroxyl groups in double-stranded DNA using NAD as a coenzyme and as the energy source for the reaction. It is essential for DNA replication and repair of damaged DNA. This is DNA ligase from Pseudomonas putida (strain ATCC 47054 / DSM 6125 / CFBP 8728 / NCIMB 11950 / KT2440).